A 249-amino-acid polypeptide reads, in one-letter code: uncharacterized protein (249 aa).

A compositionally biased stretch (polar residues) spans 51–67 (IPKDSLTNGKSSKNCMS). Disordered stretches follow at residues 51–131 (IPKD…DSPV) and 205–240 (YLNA…SSDG). Low complexity predominate over residues 93–106 (SFQSMNSSMSSSTQ). A compositionally biased stretch (basic and acidic residues) spans 110–129 (RILDEKNKDQSSSNENDRDS).

It belongs to the asfivirus DP238L family.

This is an uncharacterized protein from African swine fever virus (isolate Tick/Malawi/Lil 20-1/1983) (ASFV).